The primary structure comprises 490 residues: GTPase Der (490 aa).

2 EngA-type G domains span residues 3 to 166 (PVVA…MEDL) and 203 to 376 (IKLA…DSST). GTP contacts are provided by residues 9–16 (GRPNVGKS), 56–60 (DTGGI), 118–121 (NKTD), 209–216 (GRPNVGKS), 256–260 (DTAGV), and 321–324 (NKWD). Residues 377–461 (RRVGTSMLTR…PIRIQFKEGE (85 aa)) enclose the KH-like domain.

The protein belongs to the TRAFAC class TrmE-Era-EngA-EngB-Septin-like GTPase superfamily. EngA (Der) GTPase family. Associates with the 50S ribosomal subunit.

GTPase that plays an essential role in the late steps of ribosome biogenesis. This is GTPase Der from Escherichia coli O17:K52:H18 (strain UMN026 / ExPEC).